The chain runs to 324 residues: 3-hydroxyisobutyrate dehydrogenase, mitochondrial (324 aa).

A mitochondrion-targeting transit peptide spans 1-25; the sequence is MSLRVMSPAMLNAWSQTLVRAMSTQ. Residues 29-58, 92-93, and T121 contribute to the NAD(+) site; these read KNIG…HVFD and LP. The active site involves K196. Residue K271 participates in NAD(+) binding.

This sequence belongs to the HIBADH-related family. 3-hydroxyisobutyrate dehydrogenase subfamily.

The protein localises to the mitochondrion. The catalysed reaction is 3-hydroxy-2-methylpropanoate + NAD(+) = 2-methyl-3-oxopropanoate + NADH + H(+). It functions in the pathway amino-acid degradation; L-valine degradation. The protein is 3-hydroxyisobutyrate dehydrogenase, mitochondrial of Drosophila melanogaster (Fruit fly).